We begin with the raw amino-acid sequence, 653 residues long: Acetyl-coenzyme A synthetase (653 aa).

CoA contacts are provided by residues 196 to 199 (RGGK) and Thr-315. ATP-binding positions include 391–393 (GEP), 415–420 (DTWWQT), Asp-506, and Arg-521. Residue Ser-529 coordinates CoA. ATP is bound at residue Arg-532. Mg(2+)-binding residues include Val-543 and Val-548. Lys-618 is modified (N6-acetyllysine).

The protein belongs to the ATP-dependent AMP-binding enzyme family. The cofactor is Mg(2+). In terms of processing, acetylated. Deacetylation by the SIR2-homolog deacetylase activates the enzyme.

The catalysed reaction is acetate + ATP + CoA = acetyl-CoA + AMP + diphosphate. In terms of biological role, catalyzes the conversion of acetate into acetyl-CoA (AcCoA), an essential intermediate at the junction of anabolic and catabolic pathways. AcsA undergoes a two-step reaction. In the first half reaction, AcsA combines acetate with ATP to form acetyl-adenylate (AcAMP) intermediate. In the second half reaction, it can then transfer the acetyl group from AcAMP to the sulfhydryl group of CoA, forming the product AcCoA. The polypeptide is Acetyl-coenzyme A synthetase (Laribacter hongkongensis (strain HLHK9)).